The following is a 662-amino-acid chain: Probable conjugal transfer protein TrbE part 2 (662 aa).

Position 307–314 (glycine 307–serine 314) interacts with ATP.

The protein belongs to the TrbE/VirB4 family.

The chain is Probable conjugal transfer protein TrbE part 2 (trbEB) from Sinorhizobium fredii (strain NBRC 101917 / NGR234).